The following is a 380-amino-acid chain: Homoserine O-succinyltransferase (380 aa).

The AB hydrolase-1 domain occupies Asn49–Leu357. Residue Ser155 is the Nucleophile of the active site. Arg225 is a substrate binding site. Catalysis depends on residues Asp320 and His353. Asp354 contacts substrate.

The protein belongs to the AB hydrolase superfamily. MetX family. Homodimer.

The protein localises to the cytoplasm. The catalysed reaction is L-homoserine + succinyl-CoA = O-succinyl-L-homoserine + CoA. The protein operates within amino-acid biosynthesis; L-methionine biosynthesis via de novo pathway; O-succinyl-L-homoserine from L-homoserine: step 1/1. In terms of biological role, transfers a succinyl group from succinyl-CoA to L-homoserine, forming succinyl-L-homoserine. This chain is Homoserine O-succinyltransferase, found in Laribacter hongkongensis (strain HLHK9).